The primary structure comprises 359 residues: MTLESIMACCLSEEAKEARRINDEIERQLRRDKRDARRELKLLLLGTGESGKSTFIKQMRIIHGSGYSDEDKRGFTKLVYQNIFTAMQAMIRAMDTLKIPYKYEHNKAHAQLVREVDVEKVSAFENPYVDAIKSLWNDPGIQECYDRRREYQLSDSTKYYLNDLDRVADPSYLPTQQDVLRVRVPTTGIIEYPFDLQSVIFRMVDVGGQRSERRKWIHCFENVTSIMFLVALSEYDQVLVESDNENRMEESKALFRTIITYPWFQNSSVILFLNKKDLLEEKIMYSHLVDYFPEYDGPQRDAQAAREFILKMFVDLNPDSDKIIYSHFTCATDTENIRFVFAAVKDTILQLNLKEYNLV.

S-palmitoyl cysteine attachment occurs at residues Cys-9 and Cys-10. The G-alpha domain maps to 38–359 (RELKLLLLGT…QLNLKEYNLV (322 aa)). A G1 motif region spans residues 41–54 (KLLLLGTGESGKST). Residues Ser-50, Gly-51, Lys-52, Ser-53, Thr-54, Ser-156, Leu-180, Arg-181, and Arg-183 each contribute to the GTP site. Ser-53 contributes to the Mg(2+) binding site. Residues 178–186 (DVLRVRVPT) are G2 motif. Thr-186 is a binding site for Mg(2+). Residues 201-210 (FRMVDVGGQR) are G3 motif. Position 209 is a 5-glutamyl histamine (Gln-209). A G4 motif region spans residues 270–277 (ILFLNKKD). Residues Asn-274, Lys-275, Asp-277, and Ala-331 each coordinate GTP. Residues 329 to 334 (TCATDT) are G5 motif.

It belongs to the G-alpha family. G(q) subfamily. As to quaternary structure, g proteins are composed of 3 units; alpha, beta and gamma. The alpha chain contains the guanine nucleotide binding site. Interacts (GDP-bound form) with RIC8A (via C-terminus); promoting GNAQ folding and association with the plasma membrane. Binds NHERF1. Forms a complex with PECAM1 and BDKRB2. Interacts with GAS2L2. Post-translationally, palmitoylated by ZDHHC3 and ZDHHC7. Palmitoylation occurs in the Golgi and participates in the localization of GNAQ to the plasma membrane. In terms of processing, histaminylated at Gln-209 residues by TGM2.

It is found in the cell membrane. It localises to the golgi apparatus. Its subcellular location is the nucleus. The protein localises to the nucleus membrane. The catalysed reaction is GTP + H2O = GDP + phosphate + H(+). Functionally, guanine nucleotide-binding proteins (G proteins) function as transducers downstream of G protein-coupled receptors (GPCRs) in numerous signaling cascades. The alpha chain contains the guanine nucleotide binding site and alternates between an active, GTP-bound state and an inactive, GDP-bound state. Signaling by an activated GPCR promotes GDP release and GTP binding. The alpha subunit has a low GTPase activity that converts bound GTP to GDP, thereby terminating the signal. Both GDP release and GTP hydrolysis are modulated by numerous regulatory proteins. Signaling is mediated via phospholipase C-beta-dependent inositol lipid hydrolysis for signal propagation: activates phospholipase C-beta: following GPCR activation, GNAQ activates PLC-beta (PLCB1, PLCB2, PLCB3 or PLCB4), leading to production of diacylglycerol (DAG) and inositol 1,4,5-trisphosphate (IP3). Required for platelet activation. Regulates B-cell selection and survival and is required to prevent B-cell-dependent autoimmunity. Regulates chemotaxis of BM-derived neutrophils and dendritic cells (in vitro). Transduces FFAR4 signaling in response to long-chain fatty acids (LCFAs). Together with GNA11, required for heart development. In Mus musculus (Mouse), this protein is Guanine nucleotide-binding protein G(q) subunit alpha (Gnaq).